A 375-amino-acid chain; its full sequence is Queuine tRNA-ribosyltransferase (375 aa).

Asp-89 acts as the Proton acceptor in catalysis. Substrate-binding positions include 89–93 (DSGGF), Asp-143, Gln-187, and Gly-214. An RNA binding region spans residues 245-251 (GVGKPED). Asp-264 acts as the Nucleophile in catalysis. The interval 269–273 (TRNAR) is RNA binding; important for wobble base 34 recognition. Zn(2+) is bound by residues Cys-302, Cys-304, Cys-307, and His-333.

The protein belongs to the queuine tRNA-ribosyltransferase family. In terms of assembly, homodimer. Within each dimer, one monomer is responsible for RNA recognition and catalysis, while the other monomer binds to the replacement base PreQ1. Requires Zn(2+) as cofactor.

The enzyme catalyses 7-aminomethyl-7-carbaguanine + guanosine(34) in tRNA = 7-aminomethyl-7-carbaguanosine(34) in tRNA + guanine. It participates in tRNA modification; tRNA-queuosine biosynthesis. Its function is as follows. Catalyzes the base-exchange of a guanine (G) residue with the queuine precursor 7-aminomethyl-7-deazaguanine (PreQ1) at position 34 (anticodon wobble position) in tRNAs with GU(N) anticodons (tRNA-Asp, -Asn, -His and -Tyr). Catalysis occurs through a double-displacement mechanism. The nucleophile active site attacks the C1' of nucleotide 34 to detach the guanine base from the RNA, forming a covalent enzyme-RNA intermediate. The proton acceptor active site deprotonates the incoming PreQ1, allowing a nucleophilic attack on the C1' of the ribose to form the product. After dissociation, two additional enzymatic reactions on the tRNA convert PreQ1 to queuine (Q), resulting in the hypermodified nucleoside queuosine (7-(((4,5-cis-dihydroxy-2-cyclopenten-1-yl)amino)methyl)-7-deazaguanosine). The sequence is that of Queuine tRNA-ribosyltransferase from Salmonella agona (strain SL483).